Reading from the N-terminus, the 158-residue chain is Deoxyuridine 5'-triphosphate nucleotidohydrolase (158 aa).

Substrate-binding positions include 66–68 (RSG), Asn79, 83–85 (TID), and Lys93. A disordered region spans residues 139–158 (RGFGSSGVARKGHYQGKPLA).

The protein belongs to the dUTPase family. Requires Mg(2+) as cofactor.

It carries out the reaction dUTP + H2O = dUMP + diphosphate + H(+). It participates in pyrimidine metabolism; dUMP biosynthesis; dUMP from dCTP (dUTP route): step 2/2. This enzyme is involved in nucleotide metabolism: it produces dUMP, the immediate precursor of thymidine nucleotides and it decreases the intracellular concentration of dUTP so that uracil cannot be incorporated into DNA. This is Deoxyuridine 5'-triphosphate nucleotidohydrolase from Helicobacter hepaticus (strain ATCC 51449 / 3B1).